A 290-amino-acid chain; its full sequence is Lipoyl synthase (290 aa).

7 residues coordinate [4Fe-4S] cluster: Cys44, Cys49, Cys55, Cys70, Cys74, Cys77, and Ser282. The Radical SAM core domain occupies 56–271 (WGEGTATFMI…ELLGKEMGFR (216 aa)).

The protein belongs to the radical SAM superfamily. Lipoyl synthase family. It depends on [4Fe-4S] cluster as a cofactor.

It localises to the cytoplasm. It catalyses the reaction [[Fe-S] cluster scaffold protein carrying a second [4Fe-4S](2+) cluster] + N(6)-octanoyl-L-lysyl-[protein] + 2 oxidized [2Fe-2S]-[ferredoxin] + 2 S-adenosyl-L-methionine + 4 H(+) = [[Fe-S] cluster scaffold protein] + N(6)-[(R)-dihydrolipoyl]-L-lysyl-[protein] + 4 Fe(3+) + 2 hydrogen sulfide + 2 5'-deoxyadenosine + 2 L-methionine + 2 reduced [2Fe-2S]-[ferredoxin]. Its pathway is protein modification; protein lipoylation via endogenous pathway; protein N(6)-(lipoyl)lysine from octanoyl-[acyl-carrier-protein]: step 2/2. Its function is as follows. Catalyzes the radical-mediated insertion of two sulfur atoms into the C-6 and C-8 positions of the octanoyl moiety bound to the lipoyl domains of lipoate-dependent enzymes, thereby converting the octanoylated domains into lipoylated derivatives. The sequence is that of Lipoyl synthase from Flavobacterium psychrophilum (strain ATCC 49511 / DSM 21280 / CIP 103535 / JIP02/86).